The chain runs to 749 residues: 1,4-alpha-glucan branching enzyme GlgB (749 aa).

The active-site Nucleophile is the Asp-415. The Proton donor role is filled by Glu-468.

It belongs to the glycosyl hydrolase 13 family. GlgB subfamily. Monomer.

The catalysed reaction is Transfers a segment of a (1-&gt;4)-alpha-D-glucan chain to a primary hydroxy group in a similar glucan chain.. Its pathway is glycan biosynthesis; glycogen biosynthesis. Catalyzes the formation of the alpha-1,6-glucosidic linkages in glycogen by scission of a 1,4-alpha-linked oligosaccharide from growing alpha-1,4-glucan chains and the subsequent attachment of the oligosaccharide to the alpha-1,6 position. The sequence is that of 1,4-alpha-glucan branching enzyme GlgB from Nitrosococcus oceani (strain ATCC 19707 / BCRC 17464 / JCM 30415 / NCIMB 11848 / C-107).